Reading from the N-terminus, the 85-residue chain is ATP synthase subunit c (85 aa).

2 helical membrane-spanning segments follow: residues 20 to 40 and 65 to 85; these read LGAGIAVFALAGVGMGLGNIF and FALTEAVALFALLIAFLILFA.

It belongs to the ATPase C chain family. In terms of assembly, F-type ATPases have 2 components, F(1) - the catalytic core - and F(0) - the membrane proton channel. F(1) has five subunits: alpha(3), beta(3), gamma(1), delta(1), epsilon(1). F(0) has three main subunits: a(1), b(2) and c(10-14). The alpha and beta chains form an alternating ring which encloses part of the gamma chain. F(1) is attached to F(0) by a central stalk formed by the gamma and epsilon chains, while a peripheral stalk is formed by the delta and b chains.

Its subcellular location is the cell inner membrane. In terms of biological role, f(1)F(0) ATP synthase produces ATP from ADP in the presence of a proton or sodium gradient. F-type ATPases consist of two structural domains, F(1) containing the extramembraneous catalytic core and F(0) containing the membrane proton channel, linked together by a central stalk and a peripheral stalk. During catalysis, ATP synthesis in the catalytic domain of F(1) is coupled via a rotary mechanism of the central stalk subunits to proton translocation. Its function is as follows. Key component of the F(0) channel; it plays a direct role in translocation across the membrane. A homomeric c-ring of between 10-14 subunits forms the central stalk rotor element with the F(1) delta and epsilon subunits. In Gluconobacter oxydans (strain 621H) (Gluconobacter suboxydans), this protein is ATP synthase subunit c.